The primary structure comprises 200 residues: Small ribosomal subunit protein uS4 (200 aa).

Residues 22–41 are disordered; sequence TGKEIEKRPYAPGQHGPNQR. The S4 RNA-binding domain occupies 92–152; sequence TRLDNLVYRL…EKSQNLAVVG (61 aa).

It belongs to the universal ribosomal protein uS4 family. In terms of assembly, part of the 30S ribosomal subunit. Contacts protein S5. The interaction surface between S4 and S5 is involved in control of translational fidelity.

Its function is as follows. One of the primary rRNA binding proteins, it binds directly to 16S rRNA where it nucleates assembly of the body of the 30S subunit. In terms of biological role, with S5 and S12 plays an important role in translational accuracy. This Lysinibacillus sphaericus (strain C3-41) protein is Small ribosomal subunit protein uS4.